We begin with the raw amino-acid sequence, 248 residues long: 3-deoxy-manno-octulosonate cytidylyltransferase (248 aa).

This sequence belongs to the KdsB family.

Its subcellular location is the cytoplasm. The catalysed reaction is 3-deoxy-alpha-D-manno-oct-2-ulosonate + CTP = CMP-3-deoxy-beta-D-manno-octulosonate + diphosphate. The protein operates within nucleotide-sugar biosynthesis; CMP-3-deoxy-D-manno-octulosonate biosynthesis; CMP-3-deoxy-D-manno-octulosonate from 3-deoxy-D-manno-octulosonate and CTP: step 1/1. It functions in the pathway bacterial outer membrane biogenesis; lipopolysaccharide biosynthesis. Activates KDO (a required 8-carbon sugar) for incorporation into bacterial lipopolysaccharide in Gram-negative bacteria. This chain is 3-deoxy-manno-octulosonate cytidylyltransferase, found in Klebsiella pneumoniae subsp. pneumoniae (strain ATCC 700721 / MGH 78578).